We begin with the raw amino-acid sequence, 150 residues long: Arginine repressor (150 aa).

Belongs to the ArgR family.

The protein resides in the cytoplasm. It functions in the pathway amino-acid biosynthesis; L-arginine biosynthesis [regulation]. Functionally, regulates arginine biosynthesis genes. The chain is Arginine repressor from Clostridium botulinum (strain Alaska E43 / Type E3).